Consider the following 137-residue polypeptide: Keratin-associated protein 15-1 (137 aa).

Belongs to the PMG family. As to quaternary structure, interacts with hair keratins.

Functionally, in the hair cortex, hair keratin intermediate filaments are embedded in an interfilamentous matrix, consisting of hair keratin-associated proteins (KRTAP), which are essential for the formation of a rigid and resistant hair shaft through their extensive disulfide bond cross-linking with abundant cysteine residues of hair keratins. The matrix proteins include the high-sulfur and high-glycine-tyrosine keratins. In Homo sapiens (Human), this protein is Keratin-associated protein 15-1 (KRTAP15-1).